The following is a 302-amino-acid chain: Olfactory receptor 51H1 (302 aa).

Residues 1-27 are Extracellular-facing; it reads MTNLNASQANHRNFILTGIPGTPDKNP. N5 is a glycosylation site (N-linked (GlcNAc...) asparagine). The helical transmembrane segment at 28–48 threads the bilayer; that stretch reads WLAFPLGFLYTLTLLGNGTIL. Residues 49-56 are Cytoplasmic-facing; it reads AVIKVEPS. Residues 57–77 form a helical membrane-spanning segment; that stretch reads LHEPTYYFLSILALTDVSLSM. The Extracellular portion of the chain corresponds to 78-101; the sequence is STLPSMLSIYWFNAPQIVFDACIM. C99 and C191 are oxidised to a cystine. Residues 102-122 form a helical membrane-spanning segment; it reads QMFFIHVFGIVESGVLVSMAF. The Cytoplasmic portion of the chain corresponds to 123 to 141; that stretch reads DRFVAIRNPLHYVSILTHD. Residues 142–162 form a helical membrane-spanning segment; the sequence is VIRKTGIAVLTRAVCVVFPVP. At 163-198 the chain is on the extracellular side; that stretch reads FLIKCLPFCHSNVLSHSYCLHQNMMRLACASTRINS. A helical membrane pass occupies residues 199-219; it reads LYGLIVVIFTLGLDVLLTLLS. Residues 220–239 are Cytoplasmic-facing; that stretch reads YVLTLKTVLGIVSRGERLKT. The chain crosses the membrane as a helical span at residues 240-260; it reads LSTCLSHMSTVLLFYVPFMGA. Residues 261–276 lie on the Extracellular side of the membrane; sequence ASMIHRFWEHLSPVVH. Residues 277 to 297 traverse the membrane as a helical segment; the sequence is MVMADIYLLLPPVLNPIVYSV. Topologically, residues 298-302 are cytoplasmic; that stretch reads KTKQI.

Belongs to the G-protein coupled receptor 1 family.

Its subcellular location is the cell membrane. Its function is as follows. Odorant receptor. This chain is Olfactory receptor 51H1 (OR51H1), found in Homo sapiens (Human).